Consider the following 248-residue polypeptide: MAGHSKWANIKHKKAKEDAKRGKIFTKLIREITVAARLGGGDKDANPRLRAAIATALANNMSKDTIERAVVKGAGGDESANVEEVRYEGYGPGGVAIIVDCMTDNRNRTVGEVRHTFTKSGGNLGTDGSVAYMFTKRGIISFAPGVDEDALMEVALEAGAEDIITHEDGSIDVYTDPHDFSDIQEVLIEKGFNSENAEVTFDAETKAELDTETAEKVMALIDKLEDLDDVQSVYSNANFTQELIEQIG.

It belongs to the TACO1 family.

It is found in the cytoplasm. In Francisella tularensis subsp. tularensis (strain WY96-3418), this protein is Probable transcriptional regulatory protein FTW_1073.